The primary structure comprises 474 residues: PTS system MurNAc-GlcNAc-specific EIIBC component (474 aa).

One can recognise a PTS EIIB type-1 domain in the interval 5–87; it reads ERLAKDITHA…ADQSGATLAE (83 aa). Residue C27 is the Phosphocysteine intermediate; for EIIB activity of the active site. The PTS EIIC type-1 domain maps to 124–474; the sequence is KSIANIFIPL…GTTKEMRNPE (351 aa). The next 10 membrane-spanning stretches (helical) occupy residues 129–149, 167–187, 193–213, 228–248, 268–288, 299–319, 343–363, 378–398, 402–422, and 444–464; these read IFIPLIPAFIGAGLIGGIAAI, IVTVLNVIKDGMLFYLAIFTG, VFGATPGLGGVIGGTTLLTGI, LAAGQGGIIGVIFAVWLLSMV, ITLLLIGLLTIFIIMPLAGFV, IIGVGGIFSGFIIGAFFLPLV, LLPIAAMAGAGQVGAAIALWV, ALPVGFLGIGEPLIYGVTLPL, FFTACIGGGVGGAVIGGIGHI, and LGYIVGLLAAYAGGFIFTYFF.

It is found in the cell membrane. It carries out the reaction N-acetyl-beta-D-muramate-(1-&gt;4)-N-acetyl-D-glucosamine(out) + N(pros)-phospho-L-histidyl-[protein] = 6-phospho-N-acetyl-beta-D-muramate-(1-&gt;4)-N-acetyl-D-glucosamine(in) + L-histidyl-[protein]. It functions in the pathway cell wall biogenesis; peptidoglycan recycling. The phosphoenolpyruvate-dependent sugar phosphotransferase system (sugar PTS), a major carbohydrate active transport system, catalyzes the phosphorylation of incoming sugar substrates concomitantly with their translocation across the cell membrane. This system is involved in the uptake and phosphorylation of MurNAc-GlcNAc, the principle peptidoglycan turnover product of S.aureus, yielding cytoplasmic MurNAc 6P-GlcNAc. The sequence is that of PTS system MurNAc-GlcNAc-specific EIIBC component from Staphylococcus epidermidis (strain ATCC 35984 / DSM 28319 / BCRC 17069 / CCUG 31568 / BM 3577 / RP62A).